The following is a 153-amino-acid chain: MKTYSAKPAEIEKKWVVIDASGLVVGRLATIIAMRLKGKHLPIYTPHVDCGDNIVVVNAEKAVFTGRKKDQKVYYHHTGFPGGIKERTAKFVLEGRFPERVIEKAVERMLARGPLGRKIMGNLRVYKGPSHPHEAQQPVALDVAALNRKNVRN.

Belongs to the universal ribosomal protein uL13 family. In terms of assembly, part of the 50S ribosomal subunit.

Functionally, this protein is one of the early assembly proteins of the 50S ribosomal subunit, although it is not seen to bind rRNA by itself. It is important during the early stages of 50S assembly. This chain is Large ribosomal subunit protein uL13, found in Xanthobacter autotrophicus (strain ATCC BAA-1158 / Py2).